The primary structure comprises 121 residues: Large ribosomal subunit protein bL12 (121 aa).

The protein belongs to the bacterial ribosomal protein bL12 family. Homodimer. Part of the ribosomal stalk of the 50S ribosomal subunit. Forms a multimeric L10(L12)X complex, where L10 forms an elongated spine to which 2 to 4 L12 dimers bind in a sequential fashion. Binds GTP-bound translation factors.

Forms part of the ribosomal stalk which helps the ribosome interact with GTP-bound translation factors. Is thus essential for accurate translation. In Aeromonas hydrophila subsp. hydrophila (strain ATCC 7966 / DSM 30187 / BCRC 13018 / CCUG 14551 / JCM 1027 / KCTC 2358 / NCIMB 9240 / NCTC 8049), this protein is Large ribosomal subunit protein bL12.